Reading from the N-terminus, the 187-residue chain is Virulence protein ATR13 (187 aa).

The N-terminal stretch at 1-19 is a signal peptide; sequence MRLVHAVLLPGIIVFVSNG. Positions 38–41 match the RxLR motif; the sequence is RQLR. The interval 50-92 is leucine heptad repeat region; that stretch reads LSRASFGLGKAQDPLDKFFRKIINSRKPIETSYSAKGIHEKII. 4 tandem repeats follow at residues 93-103, 104-114, 115-125, and 126-136. Positions 93–136 are 4 X 11 AA tandem repeats; sequence KAYDRHVFESKKAHDRHVSKSKKAHGRHVSKSKMAHDRHVSKSE. Residues 104-136 form a disordered region; that stretch reads KAHDRHVSKSKKAHGRHVSKSKMAHDRHVSKSE. The segment covering 111 to 125 has biased composition (basic residues); that stretch reads SKSKKAHGRHVSKSK. The span at 126–136 shows a compositional bias: basic and acidic residues; that stretch reads MAHDRHVSKSE. A highly variable C-terminus domain region spans residues 137-187; that stretch reads KAPIQYASVADYLKKIYPGTDIERIVSTLKRHDEVGAKDLGAKLQTAVASQ.

This sequence belongs to the RxLR effector family.

Its subcellular location is the secreted. The protein resides in the host nucleus. The protein localises to the host nucleolus. It is found in the host cytoplasm. Secreted effector that acts as an elicitor of hypersensitive response (HR) specifically on plants carrying defense protein RPP13. Recognition of ATR13 by RPP13 initiates defense responses that are effective against oomycete, bacterial and viral pathogens. Due to high polymorphism, ATR13-Emoy2 does not recognize RPP13-Nd, the RPP13 defense protein from Arabidopsis thaliana ecotype Niederzenz. ATR13-Emoy2 is recognized by RPP13 variants RPP13-UKID44, RPP13-UKID65 and RPP13-UKID71. In Hyaloperonospora arabidopsidis (strain Emoy2) (Downy mildew agent), this protein is Virulence protein ATR13.